Consider the following 287-residue polypeptide: 4-hydroxybenzoate octaprenyltransferase (287 aa).

The next 9 helical transmembrane spans lie at 21–41 (VGIF…AKGA), 44–64 (FKIA…GCIV), 91–111 (VTEA…LVLL), 112–132 (LNRL…VYPF), 139–159 (LPQL…FAAT), 160–180 (VGHV…WPIV), 211–231 (LMIG…GWYL), 235–255 (YWFY…QFLI), and 263–283 (CFAA…GILL).

Belongs to the UbiA prenyltransferase family. Mg(2+) serves as cofactor.

It is found in the cell inner membrane. The enzyme catalyses all-trans-octaprenyl diphosphate + 4-hydroxybenzoate = 4-hydroxy-3-(all-trans-octaprenyl)benzoate + diphosphate. Its pathway is cofactor biosynthesis; ubiquinone biosynthesis. Catalyzes the prenylation of para-hydroxybenzoate (PHB) with an all-trans polyprenyl group. Mediates the second step in the final reaction sequence of ubiquinone-8 (UQ-8) biosynthesis, which is the condensation of the polyisoprenoid side chain with PHB, generating the first membrane-bound Q intermediate 3-octaprenyl-4-hydroxybenzoate. In Coxiella burnetii (strain CbuG_Q212) (Coxiella burnetii (strain Q212)), this protein is 4-hydroxybenzoate octaprenyltransferase.